A 265-amino-acid polypeptide reads, in one-letter code: Eukaryotic translation initiation factor 3 subunit J (265 aa).

Disordered regions lie at residues 1-113 and 215-237; these read MPPS…DSDL and SNEK…AAKT. Over residues 27–45 the composition is skewed to acidic residues; sequence DEEDGDVLDSWDAADDSEV. Residues 43 to 95 are a coiled coil; that stretch reads SEVEREKAAKAAEAKAKAEAEAAANKKSKAQRIAEHKTRRKAAEDEEDDESDE. A compositionally biased stretch (basic and acidic residues) spans 46-62; the sequence is EREKAAKAAEAKAKAEA. Residues 86–97 show a composition bias toward acidic residues; sequence EDEEDDESDEDE. 2 stretches are compositionally biased toward basic and acidic residues: residues 98–113 and 217–229; these read AEKR…DSDL and EKMK…DKGS.

The protein belongs to the eIF-3 subunit J family. In terms of assembly, component of the eukaryotic translation initiation factor 3 (eIF-3) complex.

The protein resides in the cytoplasm. In terms of biological role, component of the eukaryotic translation initiation factor 3 (eIF-3) complex, which is involved in protein synthesis of a specialized repertoire of mRNAs and, together with other initiation factors, stimulates binding of mRNA and methionyl-tRNAi to the 40S ribosome. The eIF-3 complex specifically targets and initiates translation of a subset of mRNAs involved in cell proliferation. The polypeptide is Eukaryotic translation initiation factor 3 subunit J (hcr1) (Emericella nidulans (strain FGSC A4 / ATCC 38163 / CBS 112.46 / NRRL 194 / M139) (Aspergillus nidulans)).